Consider the following 92-residue polypeptide: MRVSLAALAFLLTLAVLHSEANEEPAGNMRVCCFSSVTRKIPLSLVKNYERTGDKCPQEAVIFQTRSGRSICANPGQAWVQKYIEYLDQMSK.

The N-terminal stretch at 1–21 (MRVSLAALAFLLTLAVLHSEA) is a signal peptide. 2 disulfide bridges follow: Cys-32–Cys-56 and Cys-33–Cys-72.

Belongs to the intercrine beta (chemokine CC) family. In terms of tissue distribution, plasma serum.

It localises to the secreted. In terms of biological role, chemotactic activity for neutrophils and lymphocytes. Binds to heparin. This is Regakine-1 from Bos taurus (Bovine).